A 327-amino-acid polypeptide reads, in one-letter code: Beta-ketoacyl-[acyl-carrier-protein] synthase III (327 aa).

Residues C114 and H254 contribute to the active site. Residues 255–259 are ACP-binding; the sequence is QANQR. N284 is a catalytic residue.

This sequence belongs to the thiolase-like superfamily. FabH family. In terms of assembly, homodimer.

It localises to the cytoplasm. It carries out the reaction malonyl-[ACP] + acetyl-CoA + H(+) = 3-oxobutanoyl-[ACP] + CO2 + CoA. The protein operates within lipid metabolism; fatty acid biosynthesis. Catalyzes the condensation reaction of fatty acid synthesis by the addition to an acyl acceptor of two carbons from malonyl-ACP. Catalyzes the first condensation reaction which initiates fatty acid synthesis and may therefore play a role in governing the total rate of fatty acid production. Possesses both acetoacetyl-ACP synthase and acetyl transacylase activities. Its substrate specificity determines the biosynthesis of branched-chain and/or straight-chain of fatty acids. The polypeptide is Beta-ketoacyl-[acyl-carrier-protein] synthase III (Levilactobacillus brevis (strain ATCC 367 / BCRC 12310 / CIP 105137 / JCM 1170 / LMG 11437 / NCIMB 947 / NCTC 947) (Lactobacillus brevis)).